Reading from the N-terminus, the 78-residue chain is Acyl carrier protein (78 aa).

In terms of domain architecture, Carrier spans 2–77 (STIEERVKKI…AAIDYVNSHQ (76 aa)). Residue serine 37 is modified to O-(pantetheine 4'-phosphoryl)serine.

Belongs to the acyl carrier protein (ACP) family. In terms of processing, 4'-phosphopantetheine is transferred from CoA to a specific serine of apo-ACP by AcpS. This modification is essential for activity because fatty acids are bound in thioester linkage to the sulfhydryl of the prosthetic group.

The protein localises to the cytoplasm. It participates in lipid metabolism; fatty acid biosynthesis. Carrier of the growing fatty acid chain in fatty acid biosynthesis. In Pseudomonas putida (strain W619), this protein is Acyl carrier protein.